A 429-amino-acid polypeptide reads, in one-letter code: Serine hydroxymethyltransferase 1 (429 aa).

(6S)-5,6,7,8-tetrahydrofolate-binding positions include Leu-125 and Gly-129–Leu-131. The residue at position 234 (Lys-234) is an N6-(pyridoxal phosphate)lysine.

The protein belongs to the SHMT family. In terms of assembly, homodimer. It depends on pyridoxal 5'-phosphate as a cofactor.

Its subcellular location is the cytoplasm. It catalyses the reaction (6R)-5,10-methylene-5,6,7,8-tetrahydrofolate + glycine + H2O = (6S)-5,6,7,8-tetrahydrofolate + L-serine. It participates in one-carbon metabolism; tetrahydrofolate interconversion. Its pathway is amino-acid biosynthesis; glycine biosynthesis; glycine from L-serine: step 1/1. Functionally, catalyzes the reversible interconversion of serine and glycine with tetrahydrofolate (THF) serving as the one-carbon carrier. This reaction serves as the major source of one-carbon groups required for the biosynthesis of purines, thymidylate, methionine, and other important biomolecules. Also exhibits THF-independent aldolase activity toward beta-hydroxyamino acids, producing glycine and aldehydes, via a retro-aldol mechanism. This is Serine hydroxymethyltransferase 1 from Agrobacterium fabrum (strain C58 / ATCC 33970) (Agrobacterium tumefaciens (strain C58)).